Reading from the N-terminus, the 744-residue chain is Tripartite motif-containing protein 2 (744 aa).

Position 10 is a phosphoserine (Ser-10). Residues 23 to 64 form an RING-type zinc finger; that stretch reads CSICLERYKNPKVLPCLHTFCERCLQNYIPAHSLTLSCPVCR. The segment at 113-154 adopts a B box-type zinc-finger fold; sequence GKPLSCPNHDGNVMEFYCQSCETAMCRECTEGEHAEHPTVPL. 4 residues coordinate Zn(2+): Cys-118, His-121, Cys-141, and His-146. A Filamin repeat occupies 320 to 421; sequence TTNAVASETV…IRGSPFKLKV (102 aa). Thr-371 carries the phosphothreonine modification. Residues Ser-375, Ser-424, and Ser-428 each carry the phosphoserine modification. Positions 432–462 are disordered; sequence EGVKRRVKSPGSGHVKQKAVKRPASMYSTGK. 6 NHL repeats span residues 473-516, 520-563, 564-605, 609-652, 656-699, and 700-743; these read IFRV…FSND, KSRF…FSND, GKFK…FQPN, VTRF…FNQE, MLKF…FDGS, and GSFL…YRYL.

It belongs to the TRIM/RBCC family. As to quaternary structure, forms homooligomers. Interacts with TRIM3; this interaction reduces TRIM2 activity. Interacts with myosin V; myosin V may not be a substrate for ubiquitination. Interacts with NEFL. Interacts with phosphorylated BCL2L11. Interacts with SIRPA. In terms of processing, RING-type zinc finger-dependent and UBE2D1-dependent autoubiquitination.

It catalyses the reaction S-ubiquitinyl-[E2 ubiquitin-conjugating enzyme]-L-cysteine + [acceptor protein]-L-lysine = [E2 ubiquitin-conjugating enzyme]-L-cysteine + N(6)-ubiquitinyl-[acceptor protein]-L-lysine.. The protein operates within protein modification; protein ubiquitination. In terms of biological role, UBE2D1-dependent E3 ubiquitin-protein ligase that mediates the ubiquitination of NEFL and of phosphorylated BCL2L11. Plays a neuroprotective function. May play a role in neuronal rapid ischemic tolerance. Plays a role in antiviral immunity and limits New World arenavirus infection independently of its ubiquitin ligase activity. The polypeptide is Tripartite motif-containing protein 2 (Trim2) (Rattus norvegicus (Rat)).